Consider the following 781-residue polypeptide: Arf-GAP with coiled-coil, ANK repeat and PH domain-containing protein 2 (781 aa).

One can recognise a BAR domain in the interval 1–226; it reads MKVTVDFEEC…MKDLGAQLDQ (226 aa). One can recognise a PH domain in the interval 266 to 361; that stretch reads GIVMEGYLFK…WIKAVQTSIA (96 aa). Over residues 365–378 the composition is skewed to basic and acidic residues; it reads REKGDESEKQEKKS. The disordered stretch occupies residues 365–390; that stretch reads REKGDESEKQEKKSSPSTGSLESGSE. Over residues 379–388 the composition is skewed to low complexity; that stretch reads SPSTGSLESG. The Arf-GAP domain maps to 399–521; the sequence is ESALQRVQCI…KFVEKQPAAA (123 aa). The C4-type zinc-finger motif lies at 414–437; it reads CCDCGLADPRWASINLGITLCIEC. A disordered region spans residues 520-576; sequence AAVSPLESRTKVLPQSQEEKRHSAPEKSFLAIEQGAASPRVRSSDSGIQQSVDDSRE. ANK repeat units follow at residues 642 to 671, 675 to 704, and 708 to 737; these read NKAT…NVNI, KGRG…NQHA, and DGKD…NEEM.

The protein localises to the endosome membrane. It is found in the cell membrane. GAP activity stimulated by phosphatidylinositol 4,5-bisphosphate (PIP2) and phosphatidic acid. In terms of biological role, GTPase-activating protein (GAP) for ADP ribosylation factor 6 (ARF6). The chain is Arf-GAP with coiled-coil, ANK repeat and PH domain-containing protein 2 (ACAP2) from Gallus gallus (Chicken).